The chain runs to 246 residues: Alpha-tubulin N-acetyltransferase (246 aa).

The region spanning 21-202 (LTLVPDGVSR…NNFVVFHSFF (182 aa)) is the N-acetyltransferase domain. Residues 135–148 (FYVDESCQRQGYGK) and 172–181 (SNKLLGFLRK) each bind acetyl-CoA.

Belongs to the acetyltransferase ATAT1 family.

It carries out the reaction L-lysyl-[alpha-tubulin] + acetyl-CoA = N(6)-acetyl-L-lysyl-[alpha-tubulin] + CoA + H(+). Specifically acetylates 'Lys-40' in alpha-tubulin on the lumenal side of microtubules. Promotes microtubule destabilization and accelerates microtubule dynamics; this activity may be independent of acetylation activity. Acetylates alpha-tubulin with a slow enzymatic rate, due to a catalytic site that is not optimized for acetyl transfer. Enters the microtubule through each end and diffuses quickly throughout the lumen of microtubules. Acetylates only long/old microtubules because of its slow acetylation rate since it does not have time to act on dynamically unstable microtubules before the enzyme is released. This is Alpha-tubulin N-acetyltransferase from Leishmania major.